Consider the following 240-residue polypeptide: Orotidine 5'-phosphate decarboxylase (240 aa).

Substrate is bound by residues Asp19, Lys41, 68-77 (DYKYYDIEET), Thr123, Arg184, Gln193, Gly213, and Arg214. The active-site Proton donor is the Lys70.

This sequence belongs to the OMP decarboxylase family. Type 1 subfamily. As to quaternary structure, homodimer.

It catalyses the reaction orotidine 5'-phosphate + H(+) = UMP + CO2. It participates in pyrimidine metabolism; UMP biosynthesis via de novo pathway; UMP from orotate: step 2/2. Its function is as follows. Catalyzes the decarboxylation of orotidine 5'-monophosphate (OMP) to uridine 5'-monophosphate (UMP). The polypeptide is Orotidine 5'-phosphate decarboxylase (Nitrobacter winogradskyi (strain ATCC 25391 / DSM 10237 / CIP 104748 / NCIMB 11846 / Nb-255)).